The sequence spans 361 residues: Phosphoserine aminotransferase (361 aa).

Arginine 43 contributes to the L-glutamate binding site. Pyridoxal 5'-phosphate-binding residues include tryptophan 103, threonine 153, aspartate 173, and glutamine 196. Residue lysine 197 is modified to N6-(pyridoxal phosphate)lysine. 238–239 (NT) lines the pyridoxal 5'-phosphate pocket.

The protein belongs to the class-V pyridoxal-phosphate-dependent aminotransferase family. SerC subfamily. In terms of assembly, homodimer. It depends on pyridoxal 5'-phosphate as a cofactor.

It is found in the cytoplasm. It catalyses the reaction O-phospho-L-serine + 2-oxoglutarate = 3-phosphooxypyruvate + L-glutamate. It carries out the reaction 4-(phosphooxy)-L-threonine + 2-oxoglutarate = (R)-3-hydroxy-2-oxo-4-phosphooxybutanoate + L-glutamate. The protein operates within amino-acid biosynthesis; L-serine biosynthesis; L-serine from 3-phospho-D-glycerate: step 2/3. It participates in cofactor biosynthesis; pyridoxine 5'-phosphate biosynthesis; pyridoxine 5'-phosphate from D-erythrose 4-phosphate: step 3/5. Its function is as follows. Catalyzes the reversible conversion of 3-phosphohydroxypyruvate to phosphoserine and of 3-hydroxy-2-oxo-4-phosphonooxybutanoate to phosphohydroxythreonine. This Hahella chejuensis (strain KCTC 2396) protein is Phosphoserine aminotransferase.